Here is a 356-residue protein sequence, read N- to C-terminus: Protein-glutamate methylesterase/protein-glutamine glutaminase 4 (356 aa).

One can recognise a Response regulatory domain in the interval 15-132; it reads RVLVVDDSAV…SVGEMTADLV (118 aa). Aspartate 66 carries the 4-aspartylphosphate modification. Positions 162–348 constitute a CheB-type methylesterase domain; sequence ARTTLQVVAI…PLDRIAPEIL (187 aa). Catalysis depends on residues serine 174, histidine 200, and aspartate 296.

The protein belongs to the CheB family. Post-translationally, phosphorylated by CheA. Phosphorylation of the N-terminal regulatory domain activates the methylesterase activity.

Its subcellular location is the cytoplasm. The enzyme catalyses [protein]-L-glutamate 5-O-methyl ester + H2O = L-glutamyl-[protein] + methanol + H(+). It catalyses the reaction L-glutaminyl-[protein] + H2O = L-glutamyl-[protein] + NH4(+). In terms of biological role, involved in chemotaxis. Part of a chemotaxis signal transduction system that modulates chemotaxis in response to various stimuli. Catalyzes the demethylation of specific methylglutamate residues introduced into the chemoreceptors (methyl-accepting chemotaxis proteins or MCP) by CheR. Also mediates the irreversible deamidation of specific glutamine residues to glutamic acid. This is Protein-glutamate methylesterase/protein-glutamine glutaminase 4 from Anaeromyxobacter dehalogenans (strain 2CP-C).